A 445-amino-acid polypeptide reads, in one-letter code: Signal recognition particle 54 kDa protein (445 aa).

GTP is bound by residues 106–113, 186–190, and 244–247; these read GLQGSGKT, DTAGR, and TKLD.

It belongs to the GTP-binding SRP family. SRP54 subfamily. Part of the signal recognition particle protein translocation system, which is composed of SRP and FtsY. Archaeal SRP consists of a 7S RNA molecule of 300 nucleotides and two protein subunits: SRP54 and SRP19.

It localises to the cytoplasm. It catalyses the reaction GTP + H2O = GDP + phosphate + H(+). In terms of biological role, involved in targeting and insertion of nascent membrane proteins into the cytoplasmic membrane. Binds to the hydrophobic signal sequence of the ribosome-nascent chain (RNC) as it emerges from the ribosomes. The SRP-RNC complex is then targeted to the cytoplasmic membrane where it interacts with the SRP receptor FtsY. The protein is Signal recognition particle 54 kDa protein of Methanobrevibacter smithii (strain ATCC 35061 / DSM 861 / OCM 144 / PS).